The primary structure comprises 521 residues: Occludin (521 aa).

The Cytoplasmic portion of the chain corresponds to 1 to 66 (MSSRPFESPP…KWTSPPGVIR (66 aa)). An MARVEL domain is found at 60-268 (SPPGVIRILS…IIFFAVKTRR (209 aa)). A helical transmembrane segment spans residues 67-89 (ILSMLVIVMCIAIFGCVASTLAW). The Extracellular portion of the chain corresponds to 90-134 (DRGYGTGLMGGSIGYPYGSGFGSYGTGYGYGFGYGYGYGGYTDPR). The chain crosses the membrane as a helical span at residues 135-159 (AAKGFLLAMVAFCFIAALVIFVTSV). The Cytoplasmic portion of the chain corresponds to 160–169 (IRSDISRTRR). Residues 170–194 (YYLTVIILSAFLGVMMFIATIVYIM) traverse the membrane as a helical segment. Over 195-242 (GVNPTAQASGSLYSSQIYAMCNQFYASTATGLYMDQYLYHYCVVDPQE) the chain is Extracellular. Residues C215 and C236 are joined by a disulfide bond. The chain crosses the membrane as a helical span at residues 243-264 (AIAIVLGFMVIVAFALIIFFAV). At 265–521 (KTRRKMDRYD…MVGDYDRQKT (257 aa)) the chain is on the cytoplasmic side. S301 bears the Phosphoserine mark. Residues 301–407 (SAGTQDMPPP…ETDYTTGGES (107 aa)) form a disordered region. A Phosphothreonine modification is found at T304. 3 positions are modified to phosphoserine: S312, S320, and S339. Y367 bears the Phosphotyrosine mark. Phosphoserine is present on residues S368 and S369. A compositionally biased stretch (basic residues) spans 380-389 (APSKGRTGRP). Basic and acidic residues predominate over residues 390–399 (KRLEQDHYET). Y397 and Y401 each carry phosphotyrosine. Residues T402 and T403 each carry the phosphothreonine; by PKC/PRKCH modification. S407 is subject to Phosphoserine. The OCEL domain maps to 413-521 (EDWIREYPPI…MVGDYDRQKT (109 aa)). Positions 424 to 488 (SDQQRQLYKR…EYNRLKQVKG (65 aa)) form a coiled coil. A Phosphoserine modification is found at S489.

Belongs to the ELL/occludin family. In terms of assembly, interacts with TJP1/ZO1. Interacts with VAPA. Interacts with CLDN1, CLDN6, CLDN9, CLDN11, CLDN12 and CLDN17. Interacts with PLSCR1. Interacts with LSR, ILDR1 and ILDR2. Interacts with TJP2/ZO2. Dephosphorylated by PTPRJ. Less-phosphorylated forms are found in basolateral membrane, cytosol and tight junction. More-heavily phosphorylated forms are concentrated exclusively in tight junction. In terms of tissue distribution, localized at tight junctions of both epithelial and endothelial cells.

The protein resides in the cell membrane. It is found in the cell junction. It localises to the tight junction. May play a role in the formation and regulation of the tight junction (TJ) paracellular permeability barrier. Interacts with ZO-1. The sequence is that of Occludin (OCLN) from Canis lupus familiaris (Dog).